Reading from the N-terminus, the 209-residue chain is Large ribosomal subunit protein uL3 (209 aa).

The interval 133–153 (THGNSLSHRAPGSIGQNQTPG) is disordered. The residue at position 150 (glutamine 150) is an N5-methylglutamine.

The protein belongs to the universal ribosomal protein uL3 family. In terms of assembly, part of the 50S ribosomal subunit. Forms a cluster with proteins L14 and L19. In terms of processing, methylated by PrmB.

One of the primary rRNA binding proteins, it binds directly near the 3'-end of the 23S rRNA, where it nucleates assembly of the 50S subunit. This is Large ribosomal subunit protein uL3 from Pectobacterium atrosepticum (strain SCRI 1043 / ATCC BAA-672) (Erwinia carotovora subsp. atroseptica).